The primary structure comprises 327 residues: Methionyl-tRNA formyltransferase (327 aa).

121 to 124 is a binding site for (6S)-5,6,7,8-tetrahydrofolate; that stretch reads SLLP.

This sequence belongs to the Fmt family.

The catalysed reaction is L-methionyl-tRNA(fMet) + (6R)-10-formyltetrahydrofolate = N-formyl-L-methionyl-tRNA(fMet) + (6S)-5,6,7,8-tetrahydrofolate + H(+). Its function is as follows. Attaches a formyl group to the free amino group of methionyl-tRNA(fMet). The formyl group appears to play a dual role in the initiator identity of N-formylmethionyl-tRNA by promoting its recognition by IF2 and preventing the misappropriation of this tRNA by the elongation apparatus. In Burkholderia mallei (strain ATCC 23344), this protein is Methionyl-tRNA formyltransferase.